The chain runs to 399 residues: Dual-specificity RNA methyltransferase RlmN (399 aa).

The active-site Proton acceptor is the glutamate 122. The region spanning 128–371 is the Radical SAM core domain; it reads ETDRGTLCVS…VRTPRGRDIL (244 aa). Cysteine 135 and cysteine 374 are disulfide-bonded. [4Fe-4S] cluster-binding residues include cysteine 142, cysteine 146, and cysteine 149. S-adenosyl-L-methionine contacts are provided by residues 200–201, serine 232, 254–256, and asparagine 331; these read GE and SLH. Cysteine 374 (S-methylcysteine intermediate) is an active-site residue.

The protein belongs to the radical SAM superfamily. RlmN family. Requires [4Fe-4S] cluster as cofactor.

The protein localises to the cytoplasm. It carries out the reaction adenosine(2503) in 23S rRNA + 2 reduced [2Fe-2S]-[ferredoxin] + 2 S-adenosyl-L-methionine = 2-methyladenosine(2503) in 23S rRNA + 5'-deoxyadenosine + L-methionine + 2 oxidized [2Fe-2S]-[ferredoxin] + S-adenosyl-L-homocysteine. It catalyses the reaction adenosine(37) in tRNA + 2 reduced [2Fe-2S]-[ferredoxin] + 2 S-adenosyl-L-methionine = 2-methyladenosine(37) in tRNA + 5'-deoxyadenosine + L-methionine + 2 oxidized [2Fe-2S]-[ferredoxin] + S-adenosyl-L-homocysteine. Functionally, specifically methylates position 2 of adenine 2503 in 23S rRNA and position 2 of adenine 37 in tRNAs. m2A2503 modification seems to play a crucial role in the proofreading step occurring at the peptidyl transferase center and thus would serve to optimize ribosomal fidelity. This chain is Dual-specificity RNA methyltransferase RlmN, found in Rhodopseudomonas palustris (strain BisB18).